A 201-amino-acid polypeptide reads, in one-letter code: GTP cyclohydrolase 1 (201 aa).

Positions 90, 93, and 163 each coordinate Zn(2+).

It belongs to the GTP cyclohydrolase I family. In terms of assembly, toroid-shaped homodecamer, composed of two pentamers of five dimers.

It catalyses the reaction GTP + H2O = 7,8-dihydroneopterin 3'-triphosphate + formate + H(+). The protein operates within cofactor biosynthesis; 7,8-dihydroneopterin triphosphate biosynthesis; 7,8-dihydroneopterin triphosphate from GTP: step 1/1. This Streptomyces coelicolor (strain ATCC BAA-471 / A3(2) / M145) protein is GTP cyclohydrolase 1 (folE).